We begin with the raw amino-acid sequence, 589 residues long: uncharacterized protein (589 aa).

A run of 14 helical transmembrane segments spans residues 90–110, 128–148, 162–182, 189–209, 217–237, 245–265, 284–304, 311–331, 355–375, 390–410, 418–438, 448–468, 483–503, and 545–565; these read YIVI…QTVI, SWIG…CGIM, IVLF…LWLV, GIGG…ITPL, GCMG…GGAI, WIFF…IFFL, FVGI…LNIG, AHAN…GFVV, VMVT…YIPI, VHTL…GMGI, YPMI…IAIY, GFLA…LIAI, AFML…AVIY, and IRTI…LSFF.

Belongs to the major facilitator superfamily. TCR/Tet family.

It localises to the membrane. This is an uncharacterized protein from Schizosaccharomyces pombe (strain 972 / ATCC 24843) (Fission yeast).